A 381-amino-acid polypeptide reads, in one-letter code: Erythronate-4-phosphate dehydrogenase (381 aa).

2 residues coordinate substrate: S45 and T67. Residues D148, 207–209, and D233 each bind NAD(+); that span reads ASR. R209 is an active-site residue. Residue E238 is part of the active site. The active-site Proton donor is the H255. NAD(+) is bound at residue G258.

This sequence belongs to the D-isomer specific 2-hydroxyacid dehydrogenase family. PdxB subfamily. In terms of assembly, homodimer.

It localises to the cytoplasm. It carries out the reaction 4-phospho-D-erythronate + NAD(+) = (R)-3-hydroxy-2-oxo-4-phosphooxybutanoate + NADH + H(+). It participates in cofactor biosynthesis; pyridoxine 5'-phosphate biosynthesis; pyridoxine 5'-phosphate from D-erythrose 4-phosphate: step 2/5. Its function is as follows. Catalyzes the oxidation of erythronate-4-phosphate to 3-hydroxy-2-oxo-4-phosphonooxybutanoate. In Idiomarina loihiensis (strain ATCC BAA-735 / DSM 15497 / L2-TR), this protein is Erythronate-4-phosphate dehydrogenase.